The following is a 361-amino-acid chain: MFYWLTELAGTIPGINVFRYITFRTGGAMVTGALFVFLFGPWIIDHLRLAQGKGQPIRADGPPTHLMTKKGTPTMGGLMILSGLVVSTLLWANLHNPYVWVVLMVTLGFGFVGFYDDYLKVTKQTHAGFSGRLRLAVEGLIALFACLVIIWAGRDSSVMHLGIPFAKDFAINLGWFYLVFGAFIIVGAGNAVNLTDGLDGLAIVPVMIAAASFGMIAYLVGNAVFSEYLQIRYVAGTGELAVLCGAVLGAGLGFLWFNAPPASIFMGDTGSLALGGMIGSIAVAVKHEIVLAVIGGLFVFEALSVIVQVASFKLTGKRIFRMAPIHHHYEQKGWTEPQIVIRFWIIAVMLALAGLSTLKLR.

The next 10 helical transmembrane spans lie at 27–47 (GAMV…IDHL), 72–92 (TPTM…LLWA), 94–114 (LHNP…FVGF), 133–153 (LRLA…IWAG), 169–189 (FAIN…VGAG), 200–220 (GLAI…AYLV), 240–260 (LAVL…FNAP), 264–284 (IFMG…IAVA), 289–309 (IVLA…IVQV), and 338–358 (QIVI…LSTL).

It belongs to the glycosyltransferase 4 family. MraY subfamily. The cofactor is Mg(2+).

The protein localises to the cell inner membrane. The catalysed reaction is UDP-N-acetyl-alpha-D-muramoyl-L-alanyl-gamma-D-glutamyl-meso-2,6-diaminopimeloyl-D-alanyl-D-alanine + di-trans,octa-cis-undecaprenyl phosphate = di-trans,octa-cis-undecaprenyl diphospho-N-acetyl-alpha-D-muramoyl-L-alanyl-D-glutamyl-meso-2,6-diaminopimeloyl-D-alanyl-D-alanine + UMP. The protein operates within cell wall biogenesis; peptidoglycan biosynthesis. Catalyzes the initial step of the lipid cycle reactions in the biosynthesis of the cell wall peptidoglycan: transfers peptidoglycan precursor phospho-MurNAc-pentapeptide from UDP-MurNAc-pentapeptide onto the lipid carrier undecaprenyl phosphate, yielding undecaprenyl-pyrophosphoryl-MurNAc-pentapeptide, known as lipid I. In Afipia carboxidovorans (strain ATCC 49405 / DSM 1227 / KCTC 32145 / OM5) (Oligotropha carboxidovorans), this protein is Phospho-N-acetylmuramoyl-pentapeptide-transferase.